The primary structure comprises 331 residues: Tetraacyldisaccharide 4'-kinase (331 aa).

59 to 66 (FVGGTGKT) serves as a coordination point for ATP.

This sequence belongs to the LpxK family.

The catalysed reaction is a lipid A disaccharide + ATP = a lipid IVA + ADP + H(+). The protein operates within glycolipid biosynthesis; lipid IV(A) biosynthesis; lipid IV(A) from (3R)-3-hydroxytetradecanoyl-[acyl-carrier-protein] and UDP-N-acetyl-alpha-D-glucosamine: step 6/6. Transfers the gamma-phosphate of ATP to the 4'-position of a tetraacyldisaccharide 1-phosphate intermediate (termed DS-1-P) to form tetraacyldisaccharide 1,4'-bis-phosphate (lipid IVA). The protein is Tetraacyldisaccharide 4'-kinase of Alkalilimnicola ehrlichii (strain ATCC BAA-1101 / DSM 17681 / MLHE-1).